Consider the following 86-residue polypeptide: Translation initiation factor IF-1 3 (86 aa).

The 72-residue stretch at 1–72 (MAKEELIEMQ…NKGRVTFRHI (72 aa)) folds into the S1-like domain.

The protein belongs to the IF-1 family. Component of the 30S ribosomal translation pre-initiation complex which assembles on the 30S ribosome in the order IF-2 and IF-3, IF-1 and N-formylmethionyl-tRNA(fMet); mRNA recruitment can occur at any time during PIC assembly.

It localises to the cytoplasm. Its function is as follows. One of the essential components for the initiation of protein synthesis. Stabilizes the binding of IF-2 and IF-3 on the 30S subunit to which N-formylmethionyl-tRNA(fMet) subsequently binds. Helps modulate mRNA selection, yielding the 30S pre-initiation complex (PIC). Upon addition of the 50S ribosomal subunit IF-1, IF-2 and IF-3 are released leaving the mature 70S translation initiation complex. This Acidovorax sp. (strain JS42) protein is Translation initiation factor IF-1 3.